The sequence spans 82 residues: Cytochrome b-c1 complex subunit 8 (82 aa).

The Mitochondrial matrix portion of the chain corresponds to 2–39 (GRQFGHLTRVRHVITYSLSPFEQRAFPHYFSKGIPNVL). The residue at position 33 (lysine 33) is an N6-acetyllysine; alternate. Lysine 33 carries the post-translational modification N6-succinyllysine; alternate. The chain crosses the membrane as a helical span at residues 40 to 68 (RRTRACILRVAPPFVAFYLVYTWGTQEFE). At 69–82 (KSKRKNPAAYENDR) the chain is on the mitochondrial intermembrane side.

Belongs to the UQCRQ/QCR8 family. Component of the ubiquinol-cytochrome c oxidoreductase (cytochrome b-c1 complex, complex III, CIII), a multisubunit enzyme composed of 11 subunits. The complex is composed of 3 respiratory subunits cytochrome b, cytochrome c1 and Rieske protein UQCRFS1, 2 core protein subunits UQCRC1/QCR1 and UQCRC2/QCR2, and 6 low-molecular weight protein subunits UQCRH/QCR6, UQCRB/QCR7, UQCRQ/QCR8, UQCR10/QCR9, UQCR11/QCR10 and subunit 9, the cleavage product of Rieske protein UQCRFS1. The complex exists as an obligatory dimer and forms supercomplexes (SCs) in the inner mitochondrial membrane with NADH-ubiquinone oxidoreductase (complex I, CI) and cytochrome c oxidase (complex IV, CIV), resulting in different assemblies (supercomplex SCI(1)III(2)IV(1) and megacomplex MCI(2)III(2)IV(2)). Interacts with UQCC6.

It is found in the mitochondrion inner membrane. Functionally, component of the ubiquinol-cytochrome c oxidoreductase, a multisubunit transmembrane complex that is part of the mitochondrial electron transport chain which drives oxidative phosphorylation. The respiratory chain contains 3 multisubunit complexes succinate dehydrogenase (complex II, CII), ubiquinol-cytochrome c oxidoreductase (cytochrome b-c1 complex, complex III, CIII) and cytochrome c oxidase (complex IV, CIV), that cooperate to transfer electrons derived from NADH and succinate to molecular oxygen, creating an electrochemical gradient over the inner membrane that drives transmembrane transport and the ATP synthase. The cytochrome b-c1 complex catalyzes electron transfer from ubiquinol to cytochrome c, linking this redox reaction to translocation of protons across the mitochondrial inner membrane, with protons being carried across the membrane as hydrogens on the quinol. In the process called Q cycle, 2 protons are consumed from the matrix, 4 protons are released into the intermembrane space and 2 electrons are passed to cytochrome c. In Bos taurus (Bovine), this protein is Cytochrome b-c1 complex subunit 8 (UQCRQ).